The chain runs to 918 residues: Cell surface glycoprotein 1 (918 aa).

The first 34 residues, 1-34 (MTDTNEKIRSLFLTALMVFSVFAGTIAFSGGAAA), serve as a signal peptide directing secretion. Asn-37, Asn-56, Asn-110, Asn-219, Asn-250, Asn-261, and Asn-291 each carry an N-linked (GlcNAc...) asparagine glycan. Asn-306 carries N-linked (GalNAc...) asparagine glycosylation. Asn-318, Asn-343, Asn-392, Asn-434, Asn-487, Asn-541, Asn-555, Asn-572, Asn-585, Asn-614, Asn-715, Asn-776, Asn-836, and Asn-845 each carry an N-linked (GlcNAc...) asparagine glycan. The segment at 815 to 894 (HQDTNGNEAY…DESETTAAEG (80 aa)) is disordered. The segment covering 833 to 846 (YTQNGSAVTDSANV) has biased composition (polar residues). The segment covering 849 to 875 (VEEEQTEAPDTETETEAPDTETEEETD) has biased composition (acidic residues). The chain crosses the membrane as a helical span at residues 894-914 (GPGFTAAIALIALVAAALLAV). The PGF sorting signal signature appears at 895 to 897 (PGF).

Belongs to the halobacterial S-layer protein family. Post-translationally, N-glycosylated on Asn-306; this N-linked glycan is a branched trisaccharide containing 2-amino-6-sulfo-2,6-dideoxy-glucose (sulfoquinovosamine). In terms of processing, cleaved by the archaeosortase ArtA at the C-terminus, with removal of a short hydrophobic segment. Lipidation.

The protein localises to the secreted. It localises to the cell wall. It is found in the S-layer. Its subcellular location is the cell membrane. S-layer protein. The S-layer is a paracrystalline mono-layered assembly of proteins which coat the surface of the cell. In H.hispanica, the S-layer contains two different glycoproteins, Slg1 and Slg2, which share highly similar amino acid sequences. This chain is Cell surface glycoprotein 1, found in Haloarcula hispanica (strain ATCC 33960 / DSM 4426 / JCM 8911 / NBRC 102182 / NCIMB 2187 / VKM B-1755).